Here is a 508-residue protein sequence, read N- to C-terminus: Histidine ammonia-lyase (508 aa).

A cross-link (5-imidazolinone (Ala-Gly)) is located at residues 143 to 145; it reads ASG. At Ser144 the chain carries 2,3-didehydroalanine (Ser).

Belongs to the PAL/histidase family. Post-translationally, contains an active site 4-methylidene-imidazol-5-one (MIO), which is formed autocatalytically by cyclization and dehydration of residues Ala-Ser-Gly.

It localises to the cytoplasm. The catalysed reaction is L-histidine = trans-urocanate + NH4(+). It functions in the pathway amino-acid degradation; L-histidine degradation into L-glutamate; N-formimidoyl-L-glutamate from L-histidine: step 1/3. This is Histidine ammonia-lyase from Anaeromyxobacter sp. (strain K).